The chain runs to 546 residues: Chaperonin GroEL (546 aa).

Residues threonine 29 to proline 32, lysine 50, aspartate 86 to threonine 90, glycine 414, and aspartate 492 contribute to the ATP site.

The protein belongs to the chaperonin (HSP60) family. As to quaternary structure, forms a cylinder of 14 subunits composed of two heptameric rings stacked back-to-back. Interacts with the co-chaperonin GroES.

The protein resides in the cytoplasm. The catalysed reaction is ATP + H2O + a folded polypeptide = ADP + phosphate + an unfolded polypeptide.. Together with its co-chaperonin GroES, plays an essential role in assisting protein folding. The GroEL-GroES system forms a nano-cage that allows encapsulation of the non-native substrate proteins and provides a physical environment optimized to promote and accelerate protein folding. The chain is Chaperonin GroEL from Helicobacter pylori (strain ATCC 700392 / 26695) (Campylobacter pylori).